Consider the following 362-residue polypeptide: Outer mitochondrial transmembrane helix translocase (362 aa).

The Mitochondrial intermembrane segment spans residues 1-19; it reads MVLKEIPTENITRPLGRNE. A helical transmembrane segment spans residues 20-42; the sequence is VIGLLFRLTIFGAVTYFTIKWMV. The Cytoplasmic portion of the chain corresponds to 43 to 362; that stretch reads DAIDPTRKQK…HEAFMQVPLD (320 aa). Residue 137 to 144 coordinates ATP; the sequence is GPPGCGKT.

Belongs to the AAA ATPase family. MSP1 subfamily.

The protein resides in the mitochondrion outer membrane. It is found in the peroxisome membrane. Its subcellular location is the postsynaptic cell membrane. The catalysed reaction is [protein]-with a C-terminal TM segment(out) + ATP + H2O = [protein]-with a C-terminal TM segment(in) + ADP + phosphate + H(+). Its function is as follows. Outer mitochondrial translocase required to remove mislocalized tail-anchored transmembrane proteins on mitochondria. Specifically recognizes and binds tail-anchored transmembrane proteins: acts as a dislocase that mediates the ATP-dependent extraction of mistargeted tail-anchored transmembrane proteins from the mitochondrion outer membrane. Also plays a critical role in regulating the surface expression of AMPA receptors (AMPAR), thereby regulating synaptic plasticity and learning and memory. The polypeptide is Outer mitochondrial transmembrane helix translocase (Danio rerio (Zebrafish)).